Reading from the N-terminus, the 276-residue chain is Dermonecrotic toxin LsaSicTox-alphaIB2iii (276 aa).

His5 is an active-site residue. Mg(2+)-binding residues include Glu25 and Asp27. The active-site Nucleophile is the His41. Intrachain disulfides connect Cys45-Cys51 and Cys47-Cys190. Asp85 is a Mg(2+) binding site. Residues Asn129 and Asn253 are each glycosylated (N-linked (GlcNAc...) asparagine).

The protein belongs to the arthropod phospholipase D family. Class II subfamily. Requires Mg(2+) as cofactor. Expressed by the venom gland.

The protein localises to the secreted. The catalysed reaction is an N-(acyl)-sphingosylphosphocholine = an N-(acyl)-sphingosyl-1,3-cyclic phosphate + choline. The enzyme catalyses an N-(acyl)-sphingosylphosphoethanolamine = an N-(acyl)-sphingosyl-1,3-cyclic phosphate + ethanolamine. It catalyses the reaction a 1-acyl-sn-glycero-3-phosphocholine = a 1-acyl-sn-glycero-2,3-cyclic phosphate + choline. It carries out the reaction a 1-acyl-sn-glycero-3-phosphoethanolamine = a 1-acyl-sn-glycero-2,3-cyclic phosphate + ethanolamine. Dermonecrotic toxins cleave the phosphodiester linkage between the phosphate and headgroup of certain phospholipids (sphingolipid and lysolipid substrates), forming an alcohol (often choline) and a cyclic phosphate. This toxin acts on sphingomyelin (SM). It may also act on ceramide phosphoethanolamine (CPE), lysophosphatidylcholine (LPC) and lysophosphatidylethanolamine (LPE), but not on lysophosphatidylserine (LPS), and lysophosphatidylglycerol (LPG). It acts by transphosphatidylation, releasing exclusively cyclic phosphate products as second products. Induces dermonecrosis, hemolysis, increased vascular permeability, edema, inflammatory response, and platelet aggregation. The chain is Dermonecrotic toxin LsaSicTox-alphaIB2iii from Loxosceles sabina (Tucson recluse spider).